The following is a 563-amino-acid chain: Putative cysteine ligase BshC (563 aa).

Positions 474–506 (LEQSLMGTSKQAEKALDTLRQKTQRANRRKHDE) form a coiled coil.

This sequence belongs to the BshC family.

This is Putative cysteine ligase BshC from Prosthecochloris aestuarii (strain DSM 271 / SK 413).